The sequence spans 424 residues: MLEVVISDIQAREILDSRGYPTLYVKVITNTGTFGEACVPSGASTGIKEALELRDQDTSRYQGKGVLQALKNVKEVLLPVLQGVSIFDQILIDSIMVEADGTPNKEKLGANAILGVSLAAAKAAAATLGRSFYRYVGGCFAHILPCPMMNLINGGMHANNGLQFQEFMIRPIGAHSLQEAVRMGADVFHTLKNLLNDKHLATGVGDEGGFAPQLKSNSEALDLLVLAIEKAGFQPGEEISLALDCAASSFYDTKTETYAGKNSQEQVGILADLCDRYPIDSIEDGLAEEDFDGWELLTAELGENIQIVGDDLFVTNPELIAEGISKGLANAVLIKPNQIGTLTETSEAIQLAHSQGYTTILSHRSGETEDTTIADLAVAFNTGQIKTGSLSRSERIAKYNRLMAIEEELGSEGLFKDSNPFSGE.

Q165 provides a ligand contact to (2R)-2-phosphoglycerate. E207 acts as the Proton donor in catalysis. Mg(2+) contacts are provided by D244, E283, and D310. Residues K335, R364, S365, and K386 each coordinate (2R)-2-phosphoglycerate. K335 functions as the Proton acceptor in the catalytic mechanism.

This sequence belongs to the enolase family. It depends on Mg(2+) as a cofactor.

The protein resides in the cytoplasm. The protein localises to the secreted. Its subcellular location is the cell surface. It catalyses the reaction (2R)-2-phosphoglycerate = phosphoenolpyruvate + H2O. It functions in the pathway carbohydrate degradation; glycolysis; pyruvate from D-glyceraldehyde 3-phosphate: step 4/5. Its function is as follows. Catalyzes the reversible conversion of 2-phosphoglycerate (2-PG) into phosphoenolpyruvate (PEP). It is essential for the degradation of carbohydrates via glycolysis. This chain is Enolase, found in Chlamydia abortus (strain DSM 27085 / S26/3) (Chlamydophila abortus).